Reading from the N-terminus, the 343-residue chain is Probable beta-1,3-galactosyltransferase 13 (343 aa).

The helical; Signal-anchor for type II membrane protein transmembrane segment at 22-42 threads the bilayer; it reads LIVFTSLAIGLTGFLFGLSTI. Asn-265 is a glycosylation site (N-linked (GlcNAc...) asparagine).

It belongs to the glycosyltransferase 31 family. Mn(2+) is required as a cofactor.

It localises to the golgi apparatus membrane. The protein operates within protein modification; protein glycosylation. Functionally, beta-1,3-galactosyltransferase that transfers galactose from UDP-galactose to substrates with a terminal glycosyl residue. This chain is Probable beta-1,3-galactosyltransferase 13 (B3GALT13), found in Arabidopsis thaliana (Mouse-ear cress).